Here is a 178-residue protein sequence, read N- to C-terminus: MNKRTSVDASKEDLHPADPQSGEGVPPNRKNTKTSPRGEGTAPPFSARPCVWTLCEMLSILALVGVLHPFYRSNNQVYQKLKTHLRCQSSRVDGLMLKPTLLTPSQLKSPEGHLILPTFNHLVIRHILDPKQIFCVADVCTDCKFNCGSIERHQKRHLMRVSQDWEHLIRYRNQICLS.

The span at 1–16 shows a compositional bias: basic and acidic residues; sequence MNKRTSVDASKEDLHP. The tract at residues 1 to 43 is disordered; the sequence is MNKRTSVDASKEDLHPADPQSGEGVPPNRKNTKTSPRGEGTAP.

This is an uncharacterized protein from Homo sapiens (Human).